Reading from the N-terminus, the 116-residue chain is Prefoldin subunit beta (116 aa).

The protein belongs to the prefoldin subunit beta family. Heterohexamer of two alpha and four beta subunits.

Its subcellular location is the cytoplasm. Molecular chaperone capable of stabilizing a range of proteins. Seems to fulfill an ATP-independent, HSP70-like function in archaeal de novo protein folding. The protein is Prefoldin subunit beta of Methanobrevibacter smithii (strain ATCC 35061 / DSM 861 / OCM 144 / PS).